We begin with the raw amino-acid sequence, 472 residues long: Meiotic spindle formation protein mei-1 (472 aa).

The segment at 83–161 (HEAMTRQSGS…TQGILPQNSA (79 aa)) is disordered. Phosphoserine; by mbk-2 is present on serine 92. Polar residues-rich tracts occupy residues 134-143 (KSTSSMSTNP) and 150-161 (NPTQGILPQNSA). Residues 233 to 240 (GPPGTGKT) and 351 to 352 (RR) contribute to the ATP site.

It belongs to the AAA ATPase family. Katanin p60 subunit A1 subfamily. As to quaternary structure, homohexamer; ATP hydrolysis initiates a cycle between an open spiral and a closed ring conformation which is probably involved in pulling tubulin dimers out from microtubules. Interacts with mei-2, which may serve as a targeting subunit. Interacts with mel-26, which targets mei-1 for ubiquitin mediated proteolysis. Interacts with phosphatase pph-4.1. Phosphorylated. Phosphorylation by mbk-2 is required for its rapid degradation following meiosis II. Likely dephosphorylated by the PP4 complex composed of catalytic subunit pph-4.1 and regulatory subunit ppfr-1. Post-translationally, polyubiquitination targets the protein for rapid degradation via the ubiquitin system at the end of meiosis. The BTB domain protein mel-26 may serve to specifically target mei-1 for ubiquitination by cul-3 containing complexes. The cul-3 protein is in turn regulated by neddylation by ned-8.

It localises to the cytoplasm. The protein resides in the cytoskeleton. The protein localises to the spindle pole. Its subcellular location is the chromosome. The catalysed reaction is n ATP + n H2O + a microtubule = n ADP + n phosphate + (n+1) alpha/beta tubulin heterodimers.. With respect to regulation, ATPase activity is stimulated by microtubules, which promote homooligomerization. ATP-dependent microtubule severing is stimulated by interaction with mei-2. Its function is as follows. Catalytic subunit of a complex which severs microtubules in an ATP-dependent manner. Microtubule severing may promote rapid reorganization of cellular microtubule arrays. Required specifically for meiotic spindle formation in the female germline; the presence of this protein is inimical to the formation of mitotic spindles. In body wall muscles, regulates organization of myosin thick filaments. This chain is Meiotic spindle formation protein mei-1, found in Caenorhabditis elegans.